The primary structure comprises 156 residues: SCP2 sterol-binding domain-containing protein 1 (156 aa).

In terms of domain architecture, SCP2 spans 44 to 156; that stretch reads NFSVFEDISQ…ERIFREWAKI (113 aa).

The protein is SCP2 sterol-binding domain-containing protein 1 (Scp2d1) of Mus musculus (Mouse).